The primary structure comprises 442 residues: Probable 6-phospho-beta-glucosidase (442 aa).

5–73 (LKIVTIGGGS…VPIDIHLTLD (69 aa)) is an NAD(+) binding site. Substrate-binding residues include R96 and N150. Mn(2+) is bound by residues C172 and H202. Y256 functions as the Proton acceptor in the catalytic mechanism.

It belongs to the glycosyl hydrolase 4 family. Requires NAD(+) as cofactor. The cofactor is a divalent metal cation.

The enzyme catalyses 6-phospho-beta-D-glucosyl-(1-&gt;4)-D-glucose + H2O = D-glucose 6-phosphate + D-glucose. Its function is as follows. Hydrolyzes phospho-beta-glucosides. This chain is Probable 6-phospho-beta-glucosidase (licH), found in Bacillus subtilis (strain 168).